Here is a 335-residue protein sequence, read N- to C-terminus: uncharacterized protein (335 aa).

3 disordered regions span residues 153–174 (LNDK…SDRI), 218–239 (HTSV…QEEV), and 254–295 (RCKV…PVTS). Positions 156-170 (KEDEEKLDQTTESEE) are enriched in acidic residues. 2 stretches are compositionally biased toward low complexity: residues 222–234 (RRSM…SASS) and 275–295 (THTS…PVTS).

This is an uncharacterized protein from Caenorhabditis elegans.